The chain runs to 134 residues: MKLTQGCFSFLPDLTDDQIYKQVQYCLAKGWAVNIEFTDDPHPRNTYWEMWGLPMFDLQDAAGVMMELAECRRVYGDRYIRISGFDSSPGWESVRISFLVNRPPQEAEFELVRQEVGGRAIRYTTVRKAPAHVS.

The protein belongs to the RuBisCO small chain family. In terms of assembly, heterohexadecamer of 8 large and 8 small subunits.

In terms of biological role, ruBisCO catalyzes two reactions: the carboxylation of D-ribulose 1,5-bisphosphate, the primary event in carbon dioxide fixation, as well as the oxidative fragmentation of the pentose substrate. Both reactions occur simultaneously and in competition at the same active site. Although the small subunit is not catalytic it is essential for maximal activity. In Bradyrhizobium diazoefficiens (strain JCM 10833 / BCRC 13528 / IAM 13628 / NBRC 14792 / USDA 110), this protein is Ribulose bisphosphate carboxylase small subunit.